A 491-amino-acid chain; its full sequence is Ketol-acid reductoisomerase (NADP(+)) (491 aa).

The KARI N-terminal Rossmann domain occupies 15–208; that stretch reads AQLGKCRFMG…GGHRAGVLES (194 aa). Residues 45 to 48, Arg68, Arg76, Ser78, and 108 to 110 contribute to the NADP(+) site; these read CGAQ and DKQ. His132 is an active-site residue. NADP(+) is bound at residue Gly158. 2 KARI C-terminal knotted domains span residues 209–344 and 345–484; these read SFVA…TAPQ and FEGK…MTDM. Asp217, Glu221, Glu389, and Glu393 together coordinate Mg(2+). Ser414 is a substrate binding site.

The protein belongs to the ketol-acid reductoisomerase family. The cofactor is Mg(2+).

It carries out the reaction (2R)-2,3-dihydroxy-3-methylbutanoate + NADP(+) = (2S)-2-acetolactate + NADPH + H(+). The catalysed reaction is (2R,3R)-2,3-dihydroxy-3-methylpentanoate + NADP(+) = (S)-2-ethyl-2-hydroxy-3-oxobutanoate + NADPH + H(+). Its pathway is amino-acid biosynthesis; L-isoleucine biosynthesis; L-isoleucine from 2-oxobutanoate: step 2/4. It functions in the pathway amino-acid biosynthesis; L-valine biosynthesis; L-valine from pyruvate: step 2/4. Involved in the biosynthesis of branched-chain amino acids (BCAA). Catalyzes an alkyl-migration followed by a ketol-acid reduction of (S)-2-acetolactate (S2AL) to yield (R)-2,3-dihydroxy-isovalerate. In the isomerase reaction, S2AL is rearranged via a Mg-dependent methyl migration to produce 3-hydroxy-3-methyl-2-ketobutyrate (HMKB). In the reductase reaction, this 2-ketoacid undergoes a metal-dependent reduction by NADPH to yield (R)-2,3-dihydroxy-isovalerate. This chain is Ketol-acid reductoisomerase (NADP(+)), found in Salmonella choleraesuis (strain SC-B67).